Here is a 350-residue protein sequence, read N- to C-terminus: Magnesium-chelatase 38 kDa subunit (350 aa).

52-59 contributes to the ATP binding site; that stretch reads GDRGTGKS.

Belongs to the Mg-chelatase subunits D/I family.

It catalyses the reaction protoporphyrin IX + Mg(2+) + ATP + H2O = Mg-protoporphyrin IX + ADP + phosphate + 3 H(+). It participates in porphyrin-containing compound metabolism; bacteriochlorophyll biosynthesis. In terms of biological role, involved in bacteriochlorophyll biosynthesis; introduces a magnesium ion into protoporphyrin IX to yield Mg-protoporphyrin IX. The sequence is that of Magnesium-chelatase 38 kDa subunit (bchI) from Rhodobacter capsulatus (strain ATCC BAA-309 / NBRC 16581 / SB1003).